A 212-amino-acid polypeptide reads, in one-letter code: Minor capsid protein VP2 (212 aa).

It belongs to the norovirus VP2 family. As to quaternary structure, homooligomer. The portal-like structure consists in 12 copies of VP2. Interacts with capsid protein VP1.

It is found in the virion. Its subcellular location is the host cytoplasm. In terms of biological role, minor structural protein that forms a portal-like structure at a unique three-fold axis of symmetry, following binding to the host receptor. The channel formed by VP2 may allow the delivery of the viral genome through the host endosomal membrane. In Norovirus (strain Human/NoV/United States/Norwalk/1968/GI) (Hu/NV/NV/1968/US), this protein is Minor capsid protein VP2.